We begin with the raw amino-acid sequence, 438 residues long: Thymidine phosphorylase (438 aa).

It belongs to the thymidine/pyrimidine-nucleoside phosphorylase family. In terms of assembly, homodimer.

The catalysed reaction is thymidine + phosphate = 2-deoxy-alpha-D-ribose 1-phosphate + thymine. It participates in pyrimidine metabolism; dTMP biosynthesis via salvage pathway; dTMP from thymine: step 1/2. The enzymes which catalyze the reversible phosphorolysis of pyrimidine nucleosides are involved in the degradation of these compounds and in their utilization as carbon and energy sources, or in the rescue of pyrimidine bases for nucleotide synthesis. The sequence is that of Thymidine phosphorylase from Burkholderia lata (strain ATCC 17760 / DSM 23089 / LMG 22485 / NCIMB 9086 / R18194 / 383).